The following is a 327-amino-acid chain: tRNA dimethylallyltransferase (327 aa).

14–21 (GPTASGKT) is a binding site for ATP. 16–21 (TASGKT) is a substrate binding site. Interaction with substrate tRNA regions lie at residues 39-42 (DSAL) and 163-167 (QRIQR).

It belongs to the IPP transferase family. As to quaternary structure, monomer. Requires Mg(2+) as cofactor.

It catalyses the reaction adenosine(37) in tRNA + dimethylallyl diphosphate = N(6)-dimethylallyladenosine(37) in tRNA + diphosphate. In terms of biological role, catalyzes the transfer of a dimethylallyl group onto the adenine at position 37 in tRNAs that read codons beginning with uridine, leading to the formation of N6-(dimethylallyl)adenosine (i(6)A). In Xanthomonas euvesicatoria pv. vesicatoria (strain 85-10) (Xanthomonas campestris pv. vesicatoria), this protein is tRNA dimethylallyltransferase.